Here is a 429-residue protein sequence, read N- to C-terminus: Glutamyl-tRNA reductase (429 aa).

Residues 56–59 (TCNR), S119, 124–126 (EPQ), and Q130 each bind substrate. C57 (nucleophile) is an active-site residue. 199–204 (GAGEMI) is an NADP(+) binding site.

It belongs to the glutamyl-tRNA reductase family. Homodimer.

The catalysed reaction is (S)-4-amino-5-oxopentanoate + tRNA(Glu) + NADP(+) = L-glutamyl-tRNA(Glu) + NADPH + H(+). Its pathway is porphyrin-containing compound metabolism; protoporphyrin-IX biosynthesis; 5-aminolevulinate from L-glutamyl-tRNA(Glu): step 1/2. Functionally, catalyzes the NADPH-dependent reduction of glutamyl-tRNA(Glu) to glutamate 1-semialdehyde (GSA). This is Glutamyl-tRNA reductase from Herminiimonas arsenicoxydans.